A 261-amino-acid chain; its full sequence is Cytochrome c oxidase subunit 3 (261 aa).

The Mitochondrial matrix segment spans residues 1–15; the sequence is MAHQAHAYHMVDPSP. Residues 16 to 34 form a helical membrane-spanning segment; that stretch reads WPLTGAIAALLMTSGLAIW. Over 35-40 the chain is Mitochondrial intermembrane; that stretch reads FHFHST. Residues 41-66 traverse the membrane as a helical segment; it reads TLMTLGLILLLLTMYQWWRDIIREGT. Residues 67–72 are Mitochondrial matrix-facing; that stretch reads FQGHHT. Residues 73-105 form a helical membrane-spanning segment; it reads PPVQKGLRYGMILFITSEVFFFLGFFWAFYHSS. Residues 106-128 lie on the Mitochondrial intermembrane side of the membrane; the sequence is LAPTPELGGCWPPTGITPLDPFE. A helical transmembrane segment spans residues 129-152; that stretch reads VPLLNTAVLLASGVTVTWAHHSIM. Topologically, residues 153 to 155 are mitochondrial matrix; it reads EGE. A helical membrane pass occupies residues 156-183; sequence RKQAIQSLALTILLGLYFTALQAMEYYE. Residues 184-190 are Mitochondrial intermembrane-facing; the sequence is APFTIAD. The helical transmembrane segment at 191–223 threads the bilayer; the sequence is GVYGSTFFVATGFHGLHVIIGSTFLAVCLLRQI. Residues 224–232 lie on the Mitochondrial matrix side of the membrane; sequence QYHFTSEHH. The helical transmembrane segment at 233-256 threads the bilayer; sequence FGFEAAAWYWHFVDVVWLFLYVSI. Residues 257-261 lie on the Mitochondrial intermembrane side of the membrane; the sequence is YWWGS.

It belongs to the cytochrome c oxidase subunit 3 family. In terms of assembly, component of the cytochrome c oxidase (complex IV, CIV), a multisubunit enzyme composed of 14 subunits. The complex is composed of a catalytic core of 3 subunits MT-CO1, MT-CO2 and MT-CO3, encoded in the mitochondrial DNA, and 11 supernumerary subunits COX4I, COX5A, COX5B, COX6A, COX6B, COX6C, COX7A, COX7B, COX7C, COX8 and NDUFA4, which are encoded in the nuclear genome. The complex exists as a monomer or a dimer and forms supercomplexes (SCs) in the inner mitochondrial membrane with NADH-ubiquinone oxidoreductase (complex I, CI) and ubiquinol-cytochrome c oxidoreductase (cytochrome b-c1 complex, complex III, CIII), resulting in different assemblies (supercomplex SCI(1)III(2)IV(1) and megacomplex MCI(2)III(2)IV(2)).

The protein localises to the mitochondrion inner membrane. The catalysed reaction is 4 Fe(II)-[cytochrome c] + O2 + 8 H(+)(in) = 4 Fe(III)-[cytochrome c] + 2 H2O + 4 H(+)(out). In terms of biological role, component of the cytochrome c oxidase, the last enzyme in the mitochondrial electron transport chain which drives oxidative phosphorylation. The respiratory chain contains 3 multisubunit complexes succinate dehydrogenase (complex II, CII), ubiquinol-cytochrome c oxidoreductase (cytochrome b-c1 complex, complex III, CIII) and cytochrome c oxidase (complex IV, CIV), that cooperate to transfer electrons derived from NADH and succinate to molecular oxygen, creating an electrochemical gradient over the inner membrane that drives transmembrane transport and the ATP synthase. Cytochrome c oxidase is the component of the respiratory chain that catalyzes the reduction of oxygen to water. Electrons originating from reduced cytochrome c in the intermembrane space (IMS) are transferred via the dinuclear copper A center (CU(A)) of subunit 2 and heme A of subunit 1 to the active site in subunit 1, a binuclear center (BNC) formed by heme A3 and copper B (CU(B)). The BNC reduces molecular oxygen to 2 water molecules using 4 electrons from cytochrome c in the IMS and 4 protons from the mitochondrial matrix. This chain is Cytochrome c oxidase subunit 3 (mt-co3), found in Cyprinus carpio (Common carp).